Consider the following 218-residue polypeptide: Small ribosomal subunit protein uS3c (218 aa).

The region spanning 47 to 118 is the KH type-2 domain; it reads VQKNIRISSG…KLNIAITRIS (72 aa).

Belongs to the universal ribosomal protein uS3 family. In terms of assembly, part of the 30S ribosomal subunit.

It is found in the plastid. Its subcellular location is the chloroplast. This Crucihimalaya wallichii (Rock-cress) protein is Small ribosomal subunit protein uS3c (rps3).